Here is a 75-residue protein sequence, read N- to C-terminus: Small ribosomal subunit protein bS18 (75 aa).

Belongs to the bacterial ribosomal protein bS18 family. In terms of assembly, part of the 30S ribosomal subunit. Forms a tight heterodimer with protein bS6.

In terms of biological role, binds as a heterodimer with protein bS6 to the central domain of the 16S rRNA, where it helps stabilize the platform of the 30S subunit. The polypeptide is Small ribosomal subunit protein bS18 (Colwellia psychrerythraea (strain 34H / ATCC BAA-681) (Vibrio psychroerythus)).